The primary structure comprises 195 residues: Flavin-dependent monooxygenase, reductase subunit HsaB (195 aa).

FAD contacts are provided by residues Pro42–Ala46, Gln48–Ser49, Cys63–Thr65, Arg69–Ser70, and Arg95–Phe96. Phe160–Gly163 contributes to the NAD(+) binding site.

Belongs to the non-flavoprotein flavin reductase family. HsaAB monooxygenase consists of an oxygenase component HsaA and a reductase component HsaB.

It catalyses the reaction a reduced flavin + NAD(+) = an oxidized flavin + NADH + 2 H(+). The protein operates within lipid metabolism; steroid biosynthesis. Functionally, catalyzes the reduction of free flavins (FMN or FAD) by NADH. Subsequently, the reduced flavins diffuse to the HsaA oxygenase subunit. The polypeptide is Flavin-dependent monooxygenase, reductase subunit HsaB (hsaB) (Rhodococcus jostii (strain RHA1)).